A 363-amino-acid polypeptide reads, in one-letter code: Cyanuric acid amidohydrolase (363 aa).

The tract at residues 1-103 (MKTRVTRLTV…LVFEVDDSAP (103 aa)) is RU A. Residues Arg51 and 82 to 83 (SG) contribute to the substrate site. The tract at residues 111–247 (GLAAGVAFTR…NEVLVLGNAP (137 aa)) is RU B. The active site involves Lys161. Substrate-binding positions include Arg193 and 230-231 (SA). The active-site Nucleophile is Ser230. Residues 253-363 (YRIGHAVMED…GGPLALIVRS (111 aa)) form an RU C region. Glu297 serves as a coordination point for Mg(2+). Residues Arg324 and 343-344 (SG) each bind substrate. Mg(2+) is bound by residues Ala346, Gln349, Gly350, Pro351, and Gly354.

This sequence belongs to the cyclic amide hydrolase (CyAH) family. In terms of assembly, homotetramer.

It carries out the reaction cyanurate + H2O = 1-carboxybiuret + H(+). It participates in xenobiotic degradation; atrazine degradation; biuret from cyanurate: step 1/1. With respect to regulation, inhibited by barbituric acid. Its function is as follows. Responsible for the hydrolysis of cyanuric acid, an intermediate formed during catabolism of s-triazine based compounds in herbicides such as atrazine and polymers such as melamine. Catalyzes the hydrolytic opening of the s-triazine ring of cyanuric acid (2,4,6-trihydroxy-s-triazine) to yield carbon dioxide and carboxybiuret, which spontaneously decarboxylates to biuret. This is Cyanuric acid amidohydrolase from Ectopseudomonas oleovorans (strain CECT 5344) (Pseudomonas pseudoalcaligenes).